A 601-amino-acid polypeptide reads, in one-letter code: 1-deoxy-D-xylulose-5-phosphate synthase (601 aa).

Thiamine diphosphate contacts are provided by residues histidine 63 and glycine 104 to serine 106. Aspartate 135 serves as a coordination point for Mg(2+). Residues glycine 136–serine 137, asparagine 164, tyrosine 272, and glutamate 353 each bind thiamine diphosphate. Asparagine 164 lines the Mg(2+) pocket.

It belongs to the transketolase family. DXPS subfamily. Homodimer. It depends on Mg(2+) as a cofactor. Requires thiamine diphosphate as cofactor.

The enzyme catalyses D-glyceraldehyde 3-phosphate + pyruvate + H(+) = 1-deoxy-D-xylulose 5-phosphate + CO2. The protein operates within metabolic intermediate biosynthesis; 1-deoxy-D-xylulose 5-phosphate biosynthesis; 1-deoxy-D-xylulose 5-phosphate from D-glyceraldehyde 3-phosphate and pyruvate: step 1/1. Functionally, catalyzes the acyloin condensation reaction between C atoms 2 and 3 of pyruvate and glyceraldehyde 3-phosphate to yield 1-deoxy-D-xylulose-5-phosphate (DXP). This is 1-deoxy-D-xylulose-5-phosphate synthase from Aliarcobacter butzleri (strain RM4018) (Arcobacter butzleri).